A 163-amino-acid chain; its full sequence is Glycine cleavage system H protein, mitochondrial (163 aa).

Residues 1-34 (MALRMWASSAANALGVSCAPKSHLLPALSLSRCF) constitute a mitochondrion transit peptide. Residues 56–137 (VATIGITDHA…YEEGWMVKVK (82 aa)) enclose the Lipoyl-binding domain. Residue K96 is modified to N6-lipoyllysine.

Belongs to the GcvH family. In terms of assembly, the glycine cleavage system is composed of four proteins: P, T, L and H. (R)-lipoate serves as cofactor.

The protein localises to the mitochondrion. Functionally, the glycine cleavage system catalyzes the degradation of glycine. The H protein shuttles the methylamine group of glycine from the P protein to the T protein. This Mesembryanthemum crystallinum (Common ice plant) protein is Glycine cleavage system H protein, mitochondrial (GDCSH).